Reading from the N-terminus, the 257-residue chain is Ribonuclease PH (257 aa).

Phosphate is bound by residues Arg86 and 124 to 126; that span reads GTR.

Belongs to the RNase PH family. Homohexameric ring arranged as a trimer of dimers.

The enzyme catalyses tRNA(n+1) + phosphate = tRNA(n) + a ribonucleoside 5'-diphosphate. Its function is as follows. Phosphorolytic 3'-5' exoribonuclease that plays an important role in tRNA 3'-end maturation. Removes nucleotide residues following the 3'-CCA terminus of tRNAs; can also add nucleotides to the ends of RNA molecules by using nucleoside diphosphates as substrates, but this may not be physiologically important. Probably plays a role in initiation of 16S rRNA degradation (leading to ribosome degradation) during starvation. The sequence is that of Ribonuclease PH from Halalkalibacterium halodurans (strain ATCC BAA-125 / DSM 18197 / FERM 7344 / JCM 9153 / C-125) (Bacillus halodurans).